We begin with the raw amino-acid sequence, 549 residues long: Glucose-6-phosphate isomerase (549 aa).

The active-site Proton donor is E355. Active-site residues include H386 and K514.

It belongs to the GPI family.

It localises to the cytoplasm. The catalysed reaction is alpha-D-glucose 6-phosphate = beta-D-fructose 6-phosphate. It participates in carbohydrate biosynthesis; gluconeogenesis. The protein operates within carbohydrate degradation; glycolysis; D-glyceraldehyde 3-phosphate and glycerone phosphate from D-glucose: step 2/4. Catalyzes the reversible isomerization of glucose-6-phosphate to fructose-6-phosphate. The protein is Glucose-6-phosphate isomerase of Salmonella choleraesuis (strain SC-B67).